A 155-amino-acid chain; its full sequence is Ciliary microtubule inner protein 2C (155 aa).

Belongs to the CIMIP2 family.

It is found in the cytoplasm. The protein resides in the cytoskeleton. It localises to the cilium axoneme. In terms of biological role, microtubule inner protein (MIP) part of the dynein-decorated doublet microtubules (DMTs) in cilia axoneme, which is required for motile cilia beating. This Xenopus laevis (African clawed frog) protein is Ciliary microtubule inner protein 2C (cimip2ca).